A 36-amino-acid chain; its full sequence is Photosystem I reaction center subunit VIII (36 aa).

A helical transmembrane segment spans residues I9–Y29.

Belongs to the PsaI family.

It localises to the plastid. The protein localises to the chloroplast thylakoid membrane. May help in the organization of the PsaL subunit. The sequence is that of Photosystem I reaction center subunit VIII from Ostreococcus tauri.